The following is an 88-amino-acid chain: Large ribosomal subunit protein bL27 (88 aa).

The tract at residues 1–26 (MAHKKGTGSTRNGRDSNSKRLGVKAY) is disordered.

The protein belongs to the bacterial ribosomal protein bL27 family.

The sequence is that of Large ribosomal subunit protein bL27 from Prochlorococcus marinus (strain MIT 9211).